We begin with the raw amino-acid sequence, 360 residues long: MEAARGRLGPEQDLSTGADHQAVTFSGRPSRTLSKPPSARTLSGEEEAESVGVASRHPRPSPKTSSGSIAHRPELDTWEDKPSARATPSGARGSRGTSGSEHTPPPSSWYPEPEPSEDQPSALTVCRRGSPGGVEMNVELPQQEGDDDDDGDDEEAADRAGHSFPSRLQDSRSLDGLSGACGGGGSSSSGEAGAGGGRRATISSPLELEGTVSRHGDLTHFVANNLQLKIRLSGAPSPVPPASGRPCLTPAPTPTIPPIDPDVLRDLERLSRELGGRVDRLLCGLGGAVQELTALSVGCIQTYRDAVDSLGEAVDMSIKGMYTLLARCEELERALQPVQGLARQVRDIRRTLEVLEALCK.

Basic and acidic residues predominate over residues 1–10 (MEAARGRLGP). A disordered region spans residues 1–201 (MEAARGRLGP…AGAGGGRRAT (201 aa)). Residues 23 to 35 (VTFSGRPSRTLSK) show a composition bias toward polar residues. The residue at position 41 (threonine 41) is a Phosphothreonine. Residues 71–83 (HRPELDTWEDKPS) are compositionally biased toward basic and acidic residues. Low complexity predominate over residues 89–100 (SGARGSRGTSGS). The residue at position 130 (serine 130) is a Phosphoserine. The span at 144 to 156 (EGDDDDDGDDEEA) shows a compositional bias: acidic residues. Position 173 is a phosphoserine (serine 173). Over residues 179–198 (GACGGGGSSSSGEAGAGGGR) the composition is skewed to gly residues. Threonine 201 is modified (phosphothreonine). The residue at position 204 (serine 204) is a Phosphoserine.

Belongs to the BORCS6 family. As to quaternary structure, component of the BLOC-one-related complex (BORC) which is composed of BLOC1S1, BLOC1S2, BORCS5, BORCS6, BORCS7, BORCS8, KXD1 and SNAPIN.

It is found in the lysosome membrane. Its function is as follows. As part of the BORC complex may play a role in lysosomes movement and localization at the cell periphery. Associated with the cytosolic face of lysosomes, the BORC complex may recruit ARL8B and couple lysosomes to microtubule plus-end-directed kinesin motor. The polypeptide is BLOC-1-related complex subunit 6 (Rattus norvegicus (Rat)).